An 869-amino-acid chain; its full sequence is Bifunctional uridylyltransferase/uridylyl-removing enzyme (869 aa).

The uridylyltransferase stretch occupies residues 1–332 (MTDTPAERPD…QFDGEATPEP (332 aa)). Residues 333–691 (LGGGFSLRRG…RRAVPDNDAL (359 aa)) form a uridylyl-removing region. The HD domain occupies 450 to 572 (VDQHTLMVLR…VGTRERLDYL (123 aa)). 2 consecutive ACT domains span residues 692-774 (EVFV…RAVP) and 798-869 (RISL…LDPV).

It belongs to the GlnD family. Requires Mg(2+) as cofactor.

It carries out the reaction [protein-PII]-L-tyrosine + UTP = [protein-PII]-uridylyl-L-tyrosine + diphosphate. The enzyme catalyses [protein-PII]-uridylyl-L-tyrosine + H2O = [protein-PII]-L-tyrosine + UMP + H(+). With respect to regulation, uridylyltransferase (UTase) activity is inhibited by glutamine, while glutamine activates uridylyl-removing (UR) activity. Modifies, by uridylylation and deuridylylation, the PII regulatory proteins (GlnB and homologs), in response to the nitrogen status of the cell that GlnD senses through the glutamine level. Under low glutamine levels, catalyzes the conversion of the PII proteins and UTP to PII-UMP and PPi, while under higher glutamine levels, GlnD hydrolyzes PII-UMP to PII and UMP (deuridylylation). Thus, controls uridylylation state and activity of the PII proteins, and plays an important role in the regulation of nitrogen assimilation and metabolism. The protein is Bifunctional uridylyltransferase/uridylyl-removing enzyme of Xanthomonas axonopodis pv. citri (strain 306).